The primary structure comprises 104 residues: Thioredoxin-3 (104 aa).

Residues 2 to 104 enclose the Thioredoxin domain; that stretch reads SKVIHVTSNE…TLRSTLEANI (103 aa). Catalysis depends on nucleophile residues Cys31 and Cys34. Cys31 and Cys34 are disulfide-bonded.

It belongs to the thioredoxin family.

Participates in various redox reactions through the reversible oxidation of its active center dithiol to a disulfide and catalyzes dithiol-disulfide exchange reactions. This is Thioredoxin-3 (trxC) from Dictyostelium discoideum (Social amoeba).